We begin with the raw amino-acid sequence, 102 residues long: Large ribosomal subunit protein bL21 (102 aa).

It belongs to the bacterial ribosomal protein bL21 family. In terms of assembly, part of the 50S ribosomal subunit. Contacts protein L20.

In terms of biological role, this protein binds to 23S rRNA in the presence of protein L20. The protein is Large ribosomal subunit protein bL21 of Ehrlichia ruminantium (strain Welgevonden).